Reading from the N-terminus, the 309-residue chain is Mitochondrial fission regulator 1-like (309 aa).

The interval 189-221 (DVTEEDEEEEEEEDREEEEEDVSELVPDPMPPV) is disordered. The span at 190–211 (VTEEDEEEEEEEDREEEEEDVS) shows a compositional bias: acidic residues. At Ser253 the chain carries Phosphoserine.

It belongs to the MTFR1 family.

Its subcellular location is the mitochondrion outer membrane. In terms of biological role, mitochondrial protein required for adaptation of miochondrial dynamics to metabolic changes. Regulates mitochondrial morphology at steady state and mediates AMPK-dependent stress-induced mitochondrial fragmentation via the control of OPA1 levels. This is Mitochondrial fission regulator 1-like (mtfr1l) from Danio rerio (Zebrafish).